The sequence spans 485 residues: Terminase, large subunit (485 aa).

Residues Q97 and Q99 each contribute to the ATP site. The Walker A motif signature appears at 124 to 131; that stretch reads TSEFRGKS. A Walker B motif motif is present at residues 145 to 150; that stretch reads FVILDE. Residue E150 is the For ATPase activity of the active site. The segment at 256–438 is nuclease; that stretch reads SNSVFSGLDM…DIVMSLALAY (183 aa). Mg(2+)-binding residues include D294, D347, and D429.

This sequence belongs to the Tequatrovirus large terminase family. As to quaternary structure, interacts with the terminase small subunit; the active complex is probably heterooligomeric. Interacts with the portal protein. It depends on Mg(2+) as a cofactor.

Its function is as follows. The terminase large subunit acts as an ATP driven molecular motor necessary for viral DNA translocation into empty capsids and as an endonuclease that cuts the viral genome to initiate and to end a packaging reaction The terminase lies at a unique vertex of the procapsid and is composed of two subunits, a small terminase subunit involved in viral DNA recognition (packaging sequence), and a large terminase subunit possessing endonucleolytic and ATPase activities. Both terminase subunits heterooligomerize and are docked on the portal protein to form the packaging machine. The terminase large subunit exhibits endonuclease activity and cleaves the viral genome concatemer. Once the capsid is packaged with the DNA, the terminase complex is substituted by the tail. This Thermus thermophilus (Thermus thermophilus phage G20c) protein is Terminase, large subunit.